The sequence spans 292 residues: Probable deoxyhypusine synthase (292 aa).

Catalysis depends on Lys267, which acts as the Nucleophile.

Belongs to the deoxyhypusine synthase family. NAD(+) serves as cofactor.

It carries out the reaction [eIF5A protein]-L-lysine + spermidine = [eIF5A protein]-deoxyhypusine + propane-1,3-diamine. It participates in protein modification; eIF5A hypusination. In terms of biological role, catalyzes the NAD-dependent oxidative cleavage of spermidine and the subsequent transfer of the butylamine moiety of spermidine to the epsilon-amino group of a specific lysine residue of the eIF-5A precursor protein to form the intermediate deoxyhypusine residue. The protein is Probable deoxyhypusine synthase (dys) of Pyrobaculum aerophilum (strain ATCC 51768 / DSM 7523 / JCM 9630 / CIP 104966 / NBRC 100827 / IM2).